An 830-amino-acid polypeptide reads, in one-letter code: MIKSLLKSLLDDDEREVKKLRRTVEVINSLEAEFQELAEEEFPQKTGEFKERLKNGEELDDILPEAFALVREASQRVLGMRHFDVQLIGGMVLHQGRIAEMKTGEGKTLVATLPAYLNALEGKGVHIVTVNDYLAARDADWMGPVLEYCGLSVGLIVHGLSYEERKAAYACDVTYGTNNEMGFDYLRDNMVVSADNMVQRELHYAIIDEVDSILVDEARTPLIISGEGDKPTTLYYQIAKFIPRLRNEEDYKVDEKAHVVTLTEEGVKKVEKYFTIENLSENMELAHHVNQGLKAHSLMKRDRDYVIKDEQVIIVDEFTGRLMFGRRYSDGLHQAIEAKEGVKIEKESQTLATITFQNYFRMYHKLGGMTGTAKTEEEEFRKIYGMDVVSIPTHNPMIREDQADMVYRTEEGKFRAVVEDIISRHQAKQPVLVGTISVEKSEYLSAMLAKRGVKHQVLNAKYHEKEAQIIAQAGQEETVTIATNMAGRGTDIVLGEGIQELGGLYVLGTERHESRRIDNQLRGRSGRQGDPGESRFYVSLEDDLMRLFGSANVEGLMDRLGMDDDMPIEHKMISRAIESAQKKVEARNFSIRKNVLEYDDVINQQREVMYGERRKVLFGEDLKETVASMVDDVIEQAVERFAGEFKYSDEWDLPGFLSYIEQSIIPQPDFNQEDMRGMRKNEVVAFLAEKTQTLYEQREKEMGSEIMRELEKAILLRIIDEKWMDHIDAMDQLRNGISLRAYGQKDPLIEYKFEAFEAFQMMIESMKEDVVRYIFRVKVVQQPEERKTFENQGEEAEKKPVRVGKKIGRNDLCPCGSGKKYKKCCGRGVS.

ATP-binding positions include Gln-86, 104–108, and Asp-491; that span reads GEGKT. The Zn(2+) site is built by Cys-813, Cys-815, Cys-824, and Cys-825.

Belongs to the SecA family. As to quaternary structure, monomer and homodimer. Part of the essential Sec protein translocation apparatus which comprises SecA, SecYEG and auxiliary proteins SecDF. Other proteins may also be involved. It depends on Zn(2+) as a cofactor.

It is found in the cell membrane. It localises to the cytoplasm. It catalyses the reaction ATP + H2O + cellular proteinSide 1 = ADP + phosphate + cellular proteinSide 2.. Part of the Sec protein translocase complex. Interacts with the SecYEG preprotein conducting channel. Has a central role in coupling the hydrolysis of ATP to the transfer of proteins into and across the cell membrane, serving as an ATP-driven molecular motor driving the stepwise translocation of polypeptide chains across the membrane. The sequence is that of Protein translocase subunit SecA from Syntrophomonas wolfei subsp. wolfei (strain DSM 2245B / Goettingen).